The following is a 403-amino-acid chain: Large ribosomal subunit protein uL3 (403 aa).

Positions 1-37 (MSHRKFSAPRHGSLGFLPRKRSSRHRGKVKSFPKDDP) are disordered. Phosphoserine is present on Ser-13. A compositionally biased stretch (basic residues) spans 18–31 (PRKRSSRHRGKVKS). Lys-39 is covalently cross-linked (Glycyl lysine isopeptide (Lys-Gly) (interchain with G-Cter in SUMO2)). Lys-136 carries the N6-acetyllysine modification. Glycyl lysine isopeptide (Lys-Gly) (interchain with G-Cter in SUMO2) cross-links involve residues Lys-224 and Lys-226. The residue at position 245 (His-245) is a Tele-methylhistidine. An N6-acetyllysine; alternate mark is found at Lys-286 and Lys-294. Lys-286 participates in a covalent cross-link: Glycyl lysine isopeptide (Lys-Gly) (interchain with G-Cter in SUMO2); alternate. Residue Lys-294 forms a Glycyl lysine isopeptide (Lys-Gly) (interchain with G-Cter in SUMO1); alternate linkage. Residue Ser-304 is modified to Phosphoserine. Lys-366 is modified (N6-acetyllysine; alternate). Lys-366 is covalently cross-linked (Glycyl lysine isopeptide (Lys-Gly) (interchain with G-Cter in SUMO2); alternate). The residue at position 373 (Lys-373) is an N6-acetyllysine. Residues Lys-386, Lys-393, and Lys-399 each participate in a glycyl lysine isopeptide (Lys-Gly) (interchain with G-Cter in SUMO2) cross-link.

The protein belongs to the universal ribosomal protein uL3 family. As to quaternary structure, component of the large ribosomal subunit. Interacts with DHX33. Constitutively monomethylated at His-245 by METTL18. Methylation at His-245 regulates translation elongation by slowing ribosome traversal on tyrosine codons: slower elongation provides enough time for proper folding of synthesized proteins and prevents cellular aggregation of tyrosine-rich proteins. It is not required for incorporation of RPL3 into ribosomes.

The protein localises to the nucleus. The protein resides in the nucleolus. Its subcellular location is the cytoplasm. Component of the large ribosomal subunit. The ribosome is a large ribonucleoprotein complex responsible for the synthesis of proteins in the cell. This Oryctolagus cuniculus (Rabbit) protein is Large ribosomal subunit protein uL3 (RPL3).